A 255-amino-acid chain; its full sequence is Type III pantothenate kinase (255 aa).

6 to 13 (DVGNTNTV) provides a ligand contact to ATP. Residue 108 to 111 (GADR) participates in substrate binding. Aspartate 110 acts as the Proton acceptor in catalysis. Aspartate 130 contacts K(+). ATP is bound at residue threonine 133. Threonine 185 provides a ligand contact to substrate.

It belongs to the type III pantothenate kinase family. In terms of assembly, homodimer. It depends on NH4(+) as a cofactor. The cofactor is K(+).

Its subcellular location is the cytoplasm. The catalysed reaction is (R)-pantothenate + ATP = (R)-4'-phosphopantothenate + ADP + H(+). It functions in the pathway cofactor biosynthesis; coenzyme A biosynthesis; CoA from (R)-pantothenate: step 1/5. Functionally, catalyzes the phosphorylation of pantothenate (Pan), the first step in CoA biosynthesis. This Hyphomonas neptunium (strain ATCC 15444) protein is Type III pantothenate kinase.